Consider the following 325-residue polypeptide: BTB/POZ domain-containing protein KCTD12 (325 aa).

Residues 1–28 (MALADSTRGLPNGGGGGGGSGSSSSSAE) are disordered. Residue alanine 2 is modified to N-acetylalanine. Positions 11-21 (PNGGGGGGGSG) are enriched in gly residues. Tyrosine 119 is subject to Phosphotyrosine. Positions 129 to 202 (LGAPQQPGPG…PLLTPSQSLD (74 aa)) are disordered. A phosphoserine mark is found at serine 151, serine 171, and serine 185. Threonine 196 bears the Phosphothreonine mark. Serine 200 is subject to Phosphoserine.

As to quaternary structure, interacts as a tetramer with GABBR1 and GABBR2. Present in a variety of fetal organs, with highest expression levels in the cochlea and brain and, in stark contrast, is detected only at extremely low levels in adult organs, such as brain and lung.

It is found in the presynaptic cell membrane. It localises to the postsynaptic cell membrane. Its function is as follows. Auxiliary subunit of GABA-B receptors that determine the pharmacology and kinetics of the receptor response. Increases agonist potency and markedly alter the G-protein signaling of the receptors by accelerating onset and promoting desensitization. This chain is BTB/POZ domain-containing protein KCTD12 (KCTD12), found in Homo sapiens (Human).